The primary structure comprises 328 residues: MALTADVKDEIARVSVVRAEDMNAEVAALLRYSGALHLVAGQIVVESEVDSSATARRLMEFVEQLYHHEAQLQIIGAGNLRKSARYIVKWIKGGTEIARRTGLIDRAGRPVQGLPRTIIGGPKSACVAAWRGAFLARGTLTEPGRSCALEVATPSNEAALALVGAGRRIGVTAKTRETRGVHRVVVKDAESISALLTLMGAQATRLVWEERRMRREVRATANRLANFDDANLRRSARAAVAAAARADRALEILGEDVPTHLAEAGQLRVKHRQASLEELGQLASPPMTKDAVAGRIRRLLSMADKRAEELDIPDTHAAVTEDLFQDVE.

Positions 275-308 (SLEELGQLASPPMTKDAVAGRIRRLLSMADKRAE) form a DNA-binding region, H-T-H motif.

The protein belongs to the WhiA family.

Involved in cell division and chromosome segregation. The sequence is that of Probable cell division protein WhiA from Corynebacterium urealyticum (strain ATCC 43042 / DSM 7109).